Reading from the N-terminus, the 147-residue chain is Large ribosomal subunit protein uL11 (147 aa).

This sequence belongs to the universal ribosomal protein uL11 family. In terms of assembly, part of the ribosomal stalk of the 50S ribosomal subunit. Interacts with L10 and the large rRNA to form the base of the stalk. L10 forms an elongated spine to which L12 dimers bind in a sequential fashion forming a multimeric L10(L12)X complex. One or more lysine residues are methylated.

Its function is as follows. Forms part of the ribosomal stalk which helps the ribosome interact with GTP-bound translation factors. This Cytophaga hutchinsonii (strain ATCC 33406 / DSM 1761 / CIP 103989 / NBRC 15051 / NCIMB 9469 / D465) protein is Large ribosomal subunit protein uL11.